A 1383-amino-acid polypeptide reads, in one-letter code: DNA-directed RNA polymerase subunit beta (1383 aa).

This sequence belongs to the RNA polymerase beta chain family. The RNAP catalytic core consists of 2 alpha, 1 beta, 1 beta' and 1 omega subunit. When a sigma factor is associated with the core the holoenzyme is formed, which can initiate transcription.

The catalysed reaction is RNA(n) + a ribonucleoside 5'-triphosphate = RNA(n+1) + diphosphate. DNA-dependent RNA polymerase catalyzes the transcription of DNA into RNA using the four ribonucleoside triphosphates as substrates. This is DNA-directed RNA polymerase subunit beta from Anaplasma phagocytophilum (strain HZ).